A 555-amino-acid chain; its full sequence is Luciferin 2-monooxygenase (555 aa).

The first 11 residues, 1-11, serve as a signal peptide directing secretion; sequence MKIIILSVILA. VWFD domains lie at 80-266 and 319-494; these read IECR…EYCK and GTCV…RLCN. Intrachain disulfides connect Cys-82–Cys-222, Cys-321–Cys-454, Cys-343–Cys-493, and Cys-352–Cys-451. 2 N-linked (GlcNAc...) asparagine glycosylation sites follow: Asn-186 and Asn-408.

Post-translationally, the cysteine residues presumably exist in intramolecular disulfide bridges. In terms of processing, the N-terminus is blocked.

The catalysed reaction is Cypridina luciferin + O2 = oxidized Cypridina luciferin + hnu + CO2. This is Luciferin 2-monooxygenase from Vargula hilgendorfii (Sea firefly).